Reading from the N-terminus, the 255-residue chain is MVDPVAALCNYNVLEVIFSYLELDDLSHCSQVCKSWYHFLNDENSDVWRWHCLNKLPKESLKSDLLSSVPTYKTKLRAYFHAWSPNDCSRNVYIKPNGFTLHRNPVAQSTDAARGKIGFRHGRHTWEVIWEGPLGTVAVIGISTKEAALQCHGYVALLGSDDQSWGWNLVENHLLHNGDMQGSYPLLNNAPKYQVGERIRVILDCEDNTLSFEKNYEFLGVAFRGLPDKKLYPTVSAVYGNTEVSMVYLGTPLDG.

The 49-residue stretch at 3–51 (DPVAALCNYNVLEVIFSYLELDDLSHCSQVCKSWYHFLNDENSDVWRWH) folds into the F-box domain. The 193-residue stretch at 61–253 (LKSDLLSSVP…VSMVYLGTPL (193 aa)) folds into the B30.2/SPRY domain.

This sequence belongs to the FBXO45/Fsn family. In terms of assembly, component of an E3 ubiquitin ligase complex composed of hiw and Fsn.

The protein localises to the synapse. The protein operates within protein modification; protein ubiquitination. Functionally, required in the presynaptic motoneuron to down-regulate the levels of wnd and restrain synaptic terminal growth at the neuromuscular junction (NMJ). The chain is F-box/SPRY domain-containing protein 1 from Drosophila sechellia (Fruit fly).